A 403-amino-acid polypeptide reads, in one-letter code: uncharacterized protein (403 aa).

The Bro-N domain maps to 3-126; that stretch reads QVKIGQFKFG…EVIPQVLCTG (124 aa).

This is an uncharacterized protein from Lepidoptera (butterflies and moths).